The following is a 253-amino-acid chain: Indole-3-glycerol phosphate synthase (253 aa).

Belongs to the TrpC family.

The enzyme catalyses 1-(2-carboxyphenylamino)-1-deoxy-D-ribulose 5-phosphate + H(+) = (1S,2R)-1-C-(indol-3-yl)glycerol 3-phosphate + CO2 + H2O. Its pathway is amino-acid biosynthesis; L-tryptophan biosynthesis; L-tryptophan from chorismate: step 4/5. The polypeptide is Indole-3-glycerol phosphate synthase (Bacillus cereus (strain B4264)).